The following is a 98-amino-acid chain: MPSIYINIFLAFILALLGMLVYRSHLMSSLLCLEGMMLSLFVLITLTALNTHFTLSFMFPIILLVFAACEAAVGLALLVMVSNTYGMDYVQNLNLLQC.

A run of 3 helical transmembrane segments spans residues 1 to 21, 29 to 49, and 61 to 81; these read MPSI…GMLV, SLLC…LTAL, and IILL…LVMV.

It belongs to the complex I subunit 4L family. Core subunit of respiratory chain NADH dehydrogenase (Complex I) which is composed of 45 different subunits.

It is found in the mitochondrion inner membrane. It carries out the reaction a ubiquinone + NADH + 5 H(+)(in) = a ubiquinol + NAD(+) + 4 H(+)(out). In terms of biological role, core subunit of the mitochondrial membrane respiratory chain NADH dehydrogenase (Complex I) which catalyzes electron transfer from NADH through the respiratory chain, using ubiquinone as an electron acceptor. Part of the enzyme membrane arm which is embedded in the lipid bilayer and involved in proton translocation. The sequence is that of NADH-ubiquinone oxidoreductase chain 4L (MT-ND4L) from Oryctolagus cuniculus (Rabbit).